We begin with the raw amino-acid sequence, 2606 residues long: Large tegument protein deneddylase (2606 aa).

The segment at 1 to 235 (MAFQAQTDTG…LKRSGAYVNL (235 aa)) is deubiquitination activity. The 212-residue stretch at 14–225 (LATASSHQGD…LLANYGIASA (212 aa)) folds into the Peptidase C76 domain. Active-site residues include cysteine 34, aspartate 163, and histidine 165. Disordered regions lie at residues 318-349 (IAIS…PNEA), 390-411 (DTDS…KSGQ), 1020-1135 (KKGL…ESSE), 2253-2316 (PEIH…PTPL), and 2434-2458 (PPHD…ERKY). The span at 1038–1050 (TPVTDSKLIQDSQ) shows a compositional bias: polar residues. Residues 1051 to 1061 (QNDRHQKEKPL) show a composition bias toward basic and acidic residues. Residues 1085–1097 (KPQNLSLPVSTNK) show a composition bias toward polar residues. Residues 1105–1132 (ESSPIESTSPSHSPVSSMESQNGSFSLE) show a composition bias toward low complexity. The segment covering 2304–2316 (PNPPRPTTFPTPL) has biased composition (pro residues).

This sequence belongs to the herpesviridae large tegument protein family. Interacts with host CUL1 and CUL4A; these interactions inhibit the E3 ligase activity of cullins. Interacts with inner tegument protein. Interacts with capsid vertex specific component CVC2. Interacts with the major capsid protein/MCP.

It is found in the virion tegument. Its subcellular location is the host cytoplasm. The protein localises to the host nucleus. It catalyses the reaction Thiol-dependent hydrolysis of ester, thioester, amide, peptide and isopeptide bonds formed by the C-terminal Gly of ubiquitin (a 76-residue protein attached to proteins as an intracellular targeting signal).. In terms of biological role, large tegument protein that plays multiple roles in the viral cycle. During viral entry, remains associated with the capsid while most of the tegument is detached and participates in the capsid transport toward the host nucleus. Plays a role in the routing of the capsid at the nuclear pore complex and subsequent uncoating. Within the host nucleus, acts as a deneddylase and promotes the degradation of nuclear CRLs (cullin-RING ubiquitin ligases) and thereby stabilizes nuclear CRL substrates, while cytoplasmic CRLs remain unaffected. These modifications prevent host cell cycle S-phase progression and create a favorable environment allowing efficient viral genome replication. Participates later in the secondary envelopment of capsids. Indeed, plays a linker role for the association of the outer viral tegument to the capsids together with the inner tegument protein. This is Large tegument protein deneddylase (64) from Connochaetes taurinus (Blue wildebeest).